The chain runs to 574 residues: Eukaryotic translation initiation factor 3 subunit D (574 aa).

The disordered stretch occupies residues 153–178 (QRRGGNARQGQRGQGGRFGGDRPKER). The segment covering 154–163 (RRGGNARQGQ) has biased composition (low complexity). Residues 312–326 (PVETLTVSETSAEPP) are RNA gate. Residues 555-574 (EGTFDSERESSEEENSDDDQ) form a disordered region. A compositionally biased stretch (acidic residues) spans 564-574 (SSEEENSDDDQ).

The protein belongs to the eIF-3 subunit D family. As to quaternary structure, component of the eukaryotic translation initiation factor 3 (eIF-3) complex.

It is found in the cytoplasm. In terms of biological role, mRNA cap-binding component of the eukaryotic translation initiation factor 3 (eIF-3) complex, which is involved in protein synthesis of a specialized repertoire of mRNAs and, together with other initiation factors, stimulates binding of mRNA and methionyl-tRNAi to the 40S ribosome. The eIF-3 complex specifically targets and initiates translation of a subset of mRNAs involved in cell proliferation. In the eIF-3 complex, eif3d specifically recognizes and binds the 7-methylguanosine cap of a subset of mRNAs. This is Eukaryotic translation initiation factor 3 subunit D from Caenorhabditis briggsae.